The primary structure comprises 321 residues: Malate dehydrogenase (321 aa).

NAD(+) is bound by residues 10–15 and aspartate 34; that span reads GAGQIG. Arginine 83 and arginine 89 together coordinate substrate. Residues asparagine 96 and 119-121 each bind NAD(+); that span reads ITN. Residues asparagine 121 and arginine 152 each contribute to the substrate site. Histidine 176 serves as the catalytic Proton acceptor.

The protein belongs to the LDH/MDH superfamily. MDH type 3 family.

It catalyses the reaction (S)-malate + NAD(+) = oxaloacetate + NADH + H(+). Functionally, catalyzes the reversible oxidation of malate to oxaloacetate. The chain is Malate dehydrogenase from Methylocella silvestris (strain DSM 15510 / CIP 108128 / LMG 27833 / NCIMB 13906 / BL2).